Consider the following 322-residue polypeptide: Lactamase-like protein nscB (322 aa).

His-97, His-99, Asp-101, and His-102 together coordinate Zn(2+). The active-site Proton donor/acceptor is the Asp-101.

Belongs to the metallo-beta-lactamase superfamily. Zn(2+) serves as cofactor.

It participates in secondary metabolite biosynthesis. Lactamase-like protein; part of the gene cluster that mediates the biosynthesis of neosartoricin B, a prenylated anthracenone that probably exhibits T-cell antiproliferative activity, suggestive of a physiological role as an immunosuppressive agent. The non-reducing polyketide synthase nscA probably synthesizes and cyclizes the decaketide backbone. The hydrolase nscB then mediates the product release through hydrolysis followed by spontaneous decarboxylation. The prenyltransferase nscD catalyzes the addition of the dimethylallyl group to the aromatic C5. The FAD-dependent monooxygenase nscC is then responsible for the stereospecific hydroxylation at C2. Neosartoricin B can be converted into two additional compounds neosartoricins C and D. Neosartoricin C is a spirocyclic compound that is cyclized through the attack of C3 hydroxyl on C14, followed by dehydration. On the other hand, neosartoricin D is a further cyclized compound in which attack of C2 on C14 in neosartoricin C results in the formation of the acetal-containing dioxabicyclo-octanone ring. Both of these compounds are novel and possibly represent related metabolites of the gene cluster. In Trichophyton rubrum (strain ATCC MYA-4607 / CBS 118892) (Athlete's foot fungus), this protein is Lactamase-like protein nscB.